A 676-amino-acid chain; its full sequence is Potassium voltage-gated channel subfamily KQT member 1 (676 aa).

Disordered regions lie at residues 1-28 (MAAA…RGSA) and 62-84 (APPA…PRPP). Over 1 to 120 (MAAASSPPRA…YNFLERPTGW (120 aa)) the chain is Cytoplasmic. Residue Ser-27 is modified to Phosphoserine; by PKA. Over residues 62 to 73 (APPASPAAPAAP) the composition is skewed to pro residues. The chain crosses the membrane as a helical span at residues 121-142 (KCFVYHFAVFLIVLVCLIFSVL). Residues 143–153 (STIEQYAALAT) lie on the Extracellular side of the membrane. The chain crosses the membrane as a helical span at residues 154-176 (GTLFWMEIVLVVFFGTEYVVRLW). The Cytoplasmic segment spans residues 177 to 192 (SAGCRSKYVGLWGRLR). A helical transmembrane segment spans residues 193-218 (FARKPISIIDLIVVVASMVVLCVGSK). The Extracellular portion of the chain corresponds to 219–226 (GQVFATSA). The helical; Voltage-sensor transmembrane segment at 227-242 (IRGIRFLQILRMLHVD) threads the bilayer. Positions 238-246 (MLHVDRQGG) are interaction with KCNE3. Residues 243–260 (RQGGTWRLLGSVVFIHRQ) are Cytoplasmic-facing. Residue Gln-244 coordinates a 1,2-diacyl-sn-glycero-3-phospho-(1D-myo-inositol-4,5-bisphosphate). Residues 261-283 (ELITTLYIGFLGLIFSSYFVYLA) traverse the membrane as a helical segment. The Extracellular segment spans residues 284 to 299 (EKDAVNESGRVEFGSY). A glycan (N-linked (GlcNAc...) asparagine) is linked at Asn-289. Residues 300-320 (ADALWWGVVTVTTIGYGDKVP) constitute an intramembrane region (pore-forming). Topologically, residues 321-322 (QT) are extracellular. The helical transmembrane segment at 323 to 348 (WVGKTIASCFSVFAISFFALPAGILG) threads the bilayer. The Cytoplasmic segment spans residues 349 to 676 (SGFALKVQQK…VPRRGPDEGS (328 aa)). Positions 370 to 382 (AAASLIQTAWRCY) are interaction with CALM. Phosphoserine occurs at positions 407 and 409. Positions 515–529 (KVIRRMQYFVAKKKF) are interaction with CALM; calcium-dependent. Positions 535 to 572 (PYDVRDVIEQYSQGHLNLMVRIKELQRRLDQSIGKPSL) are interaction with KCNE1 C-terminus. Residues 585–621 (SNTIGARLNRVEDKVTQLDQRLALITDMLHQLLSLHG) are a coiled coil. The interval 588-616 (IGARLNRVEDKVTQLDQRLALITDMLHQL) is interaction with AKAP9. Residues 589–620 (GARLNRVEDKVTQLDQRLALITDMLHQLLSLH) form a C-terminal assembly domain (tetramerization) region. Positions 620–676 (HGGSTPGSGGPPREGGAHITQPCGSGGSVDPELFLPSNTLPTYEQLTVPRRGPDEGS) are disordered. Over residues 623–632 (STPGSGGPPR) the composition is skewed to gly residues. Residues 655-664 (PSNTLPTYEQ) are compositionally biased toward polar residues.

Belongs to the potassium channel family. KQT (TC 1.A.1.15) subfamily. Kv7.1/KCNQ1 sub-subfamily. In terms of assembly, tetramer. Heterotetramer with KCNE1; targets to the membrane raft. Interacts (via C-terminus) with calmodulin; forms a heterooctameric structure (with 4:4 KCNQ1:CALM stoichiometry); the interaction is calcium-independent, constitutive, participates in the proper assembly of a functional channel and also acts a calcium sensor. KCNQ1 channels interact more strongly with Ca(2+)-CALM than with apoCALM. Interacts with AKAP9; targets protein kinase A (PKA) catalytic and regulatory subunits and protein phosphatase 1 (PP1) to the KCNQ1-KCNE1 complex, allowing PKA-mediated phosphorylation and increase of delayed rectifier potassium channel activity. Interacts with KCNE2; forms a heterooligomer complex that targets to the membrane raft and leading to currents with an apparently instantaneous activation, a rapid deactivation process and a linear current-voltage relationship and decreases the amplitude of the outward current. Interacts with AP2M1; mediates estrogen-induced internalization via clathrin-coated vesicles. Interacts with NEDD4L; promotes internalization and decreases I(Ks) currents. Interacts with USP2; counteracts the NEDD4L-specific down-regulation of I(Ks) and restore plasma membrane localization. Heterotetramer with KCNQ5; has a voltage-gated potassium channel activity. Interacts with KCNE3; four KCNE3 molecules are bound to one KCNQ1 tetramer (4:4 KCNQ1:KCNE3 stoichiometry); alters membrane raft localization; affects KCNQ1 structure and gating properties. Interacts with KCNE4; impairs KCNQ1 localization in lipid rafts and inhibits voltage-gated potassium channel activity. Interacts with KCNE5; impairs KCNQ1 localization in lipid rafts and only conducts current upon strong and continued depolarization. Interacts with SLC5A3; forms coregulatory channel-transporter complexes that modulate Na(+)-coupled myo-inositol influx through the transporter. In terms of processing, phosphorylation at Ser-27 by PKA; increases delayed rectifier potassium channel activity of the KCNQ1-KCNE1 complex through a macromolecular complex that includes PKA, PP1, and the targeting protein AKAP9. Post-translationally, ubiquitinated by NEDD4L; promotes internalization. The ubiquitinylated form is internalized through a clathrin-mediated endocytosis by interacting with AP2M1 and is recycled back to the cell membrane via RAB4A and RAB11A. Deubiquitinated by USP2; counteracts the NEDD4L-specific down-regulation of I(Ks) and restores the membrane localization. Abundantly expressed in heart, pancreas, prostate, kidney, small intestine and peripheral blood leukocytes. Less abundant in placenta, lung, spleen, colon, thymus, testis and ovaries.

The protein resides in the cell membrane. Its subcellular location is the cytoplasmic vesicle membrane. It is found in the early endosome. The protein localises to the membrane raft. It localises to the endoplasmic reticulum. The protein resides in the basolateral cell membrane. Its subcellular location is the apical cell membrane. It catalyses the reaction K(+)(in) = K(+)(out). PIP2 molecule is essential to activate KCNQ channels by inducing the coupling of the voltage-sensing domain (VSD) and the pore-forming domain (PD). Upon channel activation, PIP2 disrupts the VSD-calmodulin/CALM interactions, causing the release of CALM from the VSD which triggers the opening of the gate. Calcium potentiates KCNQ1 channel current through calcium-bound CALM. Calcium-bound CALM competes with PIP2 to stabilize the channel open state. Its function is as follows. Pore-forming subunit of the voltage-gated potassium (Kv) channel involved in the regulation of cardiomyocyte excitability and important in normal development and functions of myocardium, inner ear, stomach and colon. Associates with KCNE beta subunits that modulates current kinetics. Induces a voltage-dependent current by rapidly activating and slowly deactivating potassium-selective outward current. Also promotes a delayed voltage activated potassium current showing outward rectification characteristic. During beta-adrenergic receptor stimulation, participates in cardiac repolarization by associating with KCNE1 to form the I(Ks) cardiac potassium current that increases the amplitude and slows down the activation kinetics of outward potassium current I(Ks). Muscarinic agonist oxotremorine-M strongly suppresses KCNQ1/KCNE1 current. When associated with KCNE3, forms the potassium channel that is important for cyclic AMP-stimulated intestinal secretion of chloride ions. This interaction with KCNE3 is reduced by 17beta-estradiol, resulting in the reduction of currents. During conditions of increased substrate load, maintains the driving force for proximal tubular and intestinal sodium ions absorption, gastric acid secretion, and cAMP-induced jejunal chloride ions secretion. Allows the provision of potassium ions to the luminal membrane of the secretory canaliculus in the resting state as well as during stimulated acid secretion. When associated with KCNE2, forms a heterooligomer complex leading to currents with an apparently instantaneous activation, a rapid deactivation process and a linear current-voltage relationship and decreases the amplitude of the outward current. When associated with KCNE4, inhibits voltage-gated potassium channel activity. When associated with KCNE5, this complex only conducts current upon strong and continued depolarization. Also forms a heterotetramer with KCNQ5; has a voltage-gated potassium channel activity. Binds with phosphatidylinositol 4,5-bisphosphate. KCNQ1-KCNE2 channel associates with Na(+)-coupled myo-inositol symporter in the apical membrane of choroid plexus epithelium and regulates the myo-inositol gradient between blood and cerebrospinal fluid with an impact on neuron excitability. Functionally, non-functional alone but modulatory when coexpressed with the full-length isoform 1. The polypeptide is Potassium voltage-gated channel subfamily KQT member 1 (Homo sapiens (Human)).